Here is a 226-residue protein sequence, read N- to C-terminus: ATP synthase F(0) complex subunit a (226 aa).

5 helical membrane passes run 5–25 (LFAP…LIII), 68–88 (WSLM…LGML), 97–117 (QLSM…TTGF), 136–156 (FLIP…PVAW), and 189–209 (AFIT…VALI).

This sequence belongs to the ATPase A chain family. Component of the ATP synthase complex composed at least of ATP5F1A/subunit alpha, ATP5F1B/subunit beta, ATP5MC1/subunit c (homooctomer), MT-ATP6/subunit a, MT-ATP8/subunit 8, ATP5ME/subunit e, ATP5MF/subunit f, ATP5MG/subunit g, ATP5MK/subunit k, ATP5MJ/subunit j, ATP5F1C/subunit gamma, ATP5F1D/subunit delta, ATP5F1E/subunit epsilon, ATP5PF/subunit F6, ATP5PB/subunit b, ATP5PD/subunit d, ATP5PO/subunit OSCP. ATP synthase complex consists of a soluble F(1) head domain (subunits alpha(3) and beta(3)) - the catalytic core - and a membrane F(0) domain - the membrane proton channel (subunits c, a, 8, e, f, g, k and j). These two domains are linked by a central stalk (subunits gamma, delta, and epsilon) rotating inside the F1 region and a stationary peripheral stalk (subunits F6, b, d, and OSCP). Interacts with DNAJC30; interaction is direct.

It is found in the mitochondrion inner membrane. It catalyses the reaction H(+)(in) = H(+)(out). Its function is as follows. Subunit a, of the mitochondrial membrane ATP synthase complex (F(1)F(0) ATP synthase or Complex V) that produces ATP from ADP in the presence of a proton gradient across the membrane which is generated by electron transport complexes of the respiratory chain. ATP synthase complex consist of a soluble F(1) head domain - the catalytic core - and a membrane F(1) domain - the membrane proton channel. These two domains are linked by a central stalk rotating inside the F(1) region and a stationary peripheral stalk. During catalysis, ATP synthesis in the catalytic domain of F(1) is coupled via a rotary mechanism of the central stalk subunits to proton translocation. With the subunit c (ATP5MC1), forms the proton-conducting channel in the F(0) domain, that contains two crucial half-channels (inlet and outlet) that facilitate proton movement from the mitochondrial intermembrane space (IMS) into the matrix. Protons are taken up via the inlet half-channel and released through the outlet half-channel, following a Grotthuss mechanism. This chain is ATP synthase F(0) complex subunit a, found in Balaenoptera physalus (Fin whale).